The following is a 250-amino-acid chain: Phosphoribosylaminoimidazole-succinocarboxamide synthase (250 aa).

Belongs to the SAICAR synthetase family.

The catalysed reaction is 5-amino-1-(5-phospho-D-ribosyl)imidazole-4-carboxylate + L-aspartate + ATP = (2S)-2-[5-amino-1-(5-phospho-beta-D-ribosyl)imidazole-4-carboxamido]succinate + ADP + phosphate + 2 H(+). Its pathway is purine metabolism; IMP biosynthesis via de novo pathway; 5-amino-1-(5-phospho-D-ribosyl)imidazole-4-carboxamide from 5-amino-1-(5-phospho-D-ribosyl)imidazole-4-carboxylate: step 1/2. The sequence is that of Phosphoribosylaminoimidazole-succinocarboxamide synthase from Bifidobacterium adolescentis (strain ATCC 15703 / DSM 20083 / NCTC 11814 / E194a).